Consider the following 121-residue polypeptide: Phosphoribosyl-ATP pyrophosphatase (121 aa).

The protein belongs to the PRA-PH family.

The protein localises to the cytoplasm. It carries out the reaction 1-(5-phospho-beta-D-ribosyl)-ATP + H2O = 1-(5-phospho-beta-D-ribosyl)-5'-AMP + diphosphate + H(+). The protein operates within amino-acid biosynthesis; L-histidine biosynthesis; L-histidine from 5-phospho-alpha-D-ribose 1-diphosphate: step 2/9. The protein is Phosphoribosyl-ATP pyrophosphatase of Burkholderia cenocepacia (strain ATCC BAA-245 / DSM 16553 / LMG 16656 / NCTC 13227 / J2315 / CF5610) (Burkholderia cepacia (strain J2315)).